The primary structure comprises 390 residues: Formate-dependent phosphoribosylglycinamide formyltransferase (390 aa).

Residues 19–20 and glutamate 79 each bind N(1)-(5-phospho-beta-D-ribosyl)glycinamide; that span reads EL. Residues arginine 111, lysine 152, 157-162, 192-195, and glutamate 200 contribute to the ATP site; these read SSGKGQ and EGFV. One can recognise an ATP-grasp domain in the interval 116 to 305; it reads RLAAEELGLP…EFAIHARAIL (190 aa). Positions 264 and 276 each coordinate Mg(2+). N(1)-(5-phospho-beta-D-ribosyl)glycinamide is bound by residues aspartate 283, lysine 353, and 360–361; that span reads RR.

This sequence belongs to the PurK/PurT family. As to quaternary structure, homodimer.

It carries out the reaction N(1)-(5-phospho-beta-D-ribosyl)glycinamide + formate + ATP = N(2)-formyl-N(1)-(5-phospho-beta-D-ribosyl)glycinamide + ADP + phosphate + H(+). The protein operates within purine metabolism; IMP biosynthesis via de novo pathway; N(2)-formyl-N(1)-(5-phospho-D-ribosyl)glycinamide from N(1)-(5-phospho-D-ribosyl)glycinamide (formate route): step 1/1. In terms of biological role, involved in the de novo purine biosynthesis. Catalyzes the transfer of formate to 5-phospho-ribosyl-glycinamide (GAR), producing 5-phospho-ribosyl-N-formylglycinamide (FGAR). Formate is provided by PurU via hydrolysis of 10-formyl-tetrahydrofolate. The chain is Formate-dependent phosphoribosylglycinamide formyltransferase from Marinobacter nauticus (strain ATCC 700491 / DSM 11845 / VT8) (Marinobacter aquaeolei).